Consider the following 741-residue polypeptide: Transketolase-1, chloroplastic (741 aa).

Residues 1–66 (MASTSSLALS…NRSLRPLVRA (66 aa)) constitute a chloroplast transit peptide. A disordered region spans residues 22–51 (GSDQRGSLPAFSGLKSTGSRASASSRRRIA). Ala-67 carries the N-acetylalanine modification. His-103 contributes to the substrate binding site. Residues His-143 and 192-194 (GPL) each bind thiamine diphosphate. Position 233 (Asp-233) interacts with Mg(2+). Gly-234 and Asn-263 together coordinate thiamine diphosphate. Mg(2+)-binding residues include Asn-263 and Ile-265. His-340 is a substrate binding site. Thiamine diphosphate is bound at residue His-340. Phosphoserine is present on Ser-428. Substrate contacts are provided by Arg-434 and Ser-461. Thiamine diphosphate-binding residues include Glu-488 and Phe-515. Glu-488 acts as the Proton donor in catalysis. The substrate site is built by His-539, Asp-547, and Arg-598.

It belongs to the transketolase family. Homodimer. It depends on Mg(2+) as a cofactor. Requires Ca(2+) as cofactor. The cofactor is Mn(2+). Co(2+) serves as cofactor. Thiamine diphosphate is required as a cofactor.

Its subcellular location is the plastid. The protein localises to the chloroplast stroma. The catalysed reaction is D-sedoheptulose 7-phosphate + D-glyceraldehyde 3-phosphate = aldehydo-D-ribose 5-phosphate + D-xylulose 5-phosphate. Its pathway is carbohydrate biosynthesis; Calvin cycle. In terms of biological role, catalyzes the reversible transfer of a two-carbon ketol group from fructose-6-phosphate or sedoheptulose-7-phosphate to glyceraldehyde-3-phosphate to yield xylulose-5-phosphate and erythrose-4-phosphate or ribose-5-phosphate, respectively. Could act as a stress sensor involved in adaptation process. The protein is Transketolase-1, chloroplastic (TKL-1) of Arabidopsis thaliana (Mouse-ear cress).